A 493-amino-acid chain; its full sequence is MDASAEQSLPEPGSQDSVAGEDIEIVVNVGGVRQVLYGDLLSQYPETRLAELINCLAGGYDTIFSLCDDYDPGKREFYFDRDPDAFKCVIEVYYFGEVHMKKGICPICFKNEMDFWKVDLKFLDDCCKSHLSEKREELEEIARRVQLILDDLGVDAAEGRWRRCQKCVWKFLEKPESSCPARVVAVLSFLLILVSSVVMCMGTIPELQVVDSEGNRVEHPTLENVETACIGWFTLEYLLRLFSSPNKLHFALSFMNIVDVLAILPFYVSLTLTHLGARMMELTNVQQAVQALRIMRIARIFKLARHSSGLQTLTYALKRSFKELGLLLMYLAVGIFVFSALGYTMEQSHPETLFKSIPQSFWWAIITMTTVGYGDIYPKTTLGKLNAAISFLCGVIAIALPIHPIINNFVRYYNKQRVLETAAKHELELMELNSSSAEGKPGGSRSDLDTLPPEPAAREGPSWGSRLKLSHSDTFIPLLTEEKHHRTRLQSCK.

At 1–183 the chain is on the cytoplasmic side; sequence MDASAEQSLP…KPESSCPARV (183 aa). A helical transmembrane segment spans residues 184–204; that stretch reads VAVLSFLLILVSSVVMCMGTI. The helical transmembrane segment at 224-244 threads the bilayer; sequence NVETACIGWFTLEYLLRLFSS. The Cytoplasmic portion of the chain corresponds to 245 to 249; the sequence is PNKLH. Residues 250-270 form a helical membrane-spanning segment; it reads FALSFMNIVDVLAILPFYVSL. The chain crosses the membrane as a helical; Voltage-sensor span at residues 290-310; that stretch reads QALRIMRIARIFKLARHSSGL. At 311 to 324 the chain is on the cytoplasmic side; sequence QTLTYALKRSFKEL. The chain crosses the membrane as a helical span at residues 325 to 345; it reads GLLLMYLAVGIFVFSALGYTM. An intramembrane region (pore-forming) is located at residues 358–378; the sequence is PQSFWWAIITMTTVGYGDIYP. A Selectivity filter motif is present at residues 370-375; that stretch reads TVGYGD. Residues 386–406 traverse the membrane as a helical segment; the sequence is NAAISFLCGVIAIALPIHPII. Topologically, residues 407–493 are cytoplasmic; it reads NNFVRYYNKQ…HHRTRLQSCK (87 aa). A disordered region spans residues 434–468; it reads SSSAEGKPGGSRSDLDTLPPEPAAREGPSWGSRLK.

Belongs to the potassium channel family. F (TC 1.A.1.2) subfamily. Kv5.1/KCNF1 sub-subfamily. Heterotetramer with KCNB1 or KCNB2.

It localises to the cell membrane. Regulatory alpha-subunit of the voltage-gated potassium (Kv) channel which, when coassembled with KCNB1 or KCNB2, can modulate their expression and their gating kinetics by acting on deactivation upon repolarization and inactivation during maintained depolarization. Accelerates inactivation but has relatively little effect on deactivation. Coexpression with KCNB1 or KCNB2 markedly slows inactivation. Each modulatory subunit has its own specific properties of regulation, and can lead to extensive inhibitions, to large changes in kinetics, and/or to large shifts in the voltage dependencies of the inactivation process. The gating kinetics depends on the nature and stoichiometry of the associated regulatory sunbunit. Fails to produce a potassium current when expressed alone. This Mus musculus (Mouse) protein is Voltage-gated potassium channel regulatory subunit KCNF1.